A 149-amino-acid chain; its full sequence is Calmodulin-B (149 aa).

Ala-2 is subject to N-acetylalanine. 4 consecutive EF-hand domains span residues 8-43 (EQIA…LGQN), 44-79 (PTEA…KMKE), 81-116 (DSEE…LGEK), and 117-149 (LTDE…MTCK). Residues Asp-21, Asp-23, Asp-25, Thr-27, Glu-32, Asp-57, Asp-59, Asn-61, Thr-63, Glu-68, Asp-94, Asp-96, Asn-98, and Glu-105 each coordinate Ca(2+). At Lys-116 the chain carries N6,N6,N6-trimethyllysine. Residues Asp-130, Asp-132, Asp-134, Gln-136, and Glu-141 each contribute to the Ca(2+) site.

This sequence belongs to the calmodulin family.

In terms of biological role, calmodulin mediates the control of a large number of enzymes, ion channels and other proteins by Ca(2+). Among the enzymes to be stimulated by the calmodulin-Ca(2+) complex are a number of protein kinases and phosphatases. The polypeptide is Calmodulin-B (Halocynthia roretzi (Sea squirt)).